The sequence spans 197 residues: Protein Hikeshi (197 aa).

The interval Val18–Tyr55 is required for F-X-F-G repeats-nucleoporins recognition and nuclear import. The tract at residues Gln124 to Ser134 is flexible linker region involved in nuclear import of HSP70 proteins.

This sequence belongs to the OPI10 family. In terms of assembly, forms an asymmetric homodimer; required for binding and nuclear import of HSP70 proteins. Interacts with ATP-bound HSP70 proteins. Interacts with NUP62 and NUP153 (via F-X-F-G repeats). Interacts with HSPA8.

It localises to the cytoplasm. Its subcellular location is the cytosol. The protein resides in the nucleus. Acts as a specific nuclear import carrier for HSP70 proteins following heat-shock stress: acts by mediating the nucleoporin-dependent translocation of ATP-bound HSP70 proteins into the nucleus. HSP70 proteins import is required to protect cells from heat shock damages. Does not translocate ADP-bound HSP70 proteins into the nucleus. This Bos taurus (Bovine) protein is Protein Hikeshi.